We begin with the raw amino-acid sequence, 404 residues long: Probable eukaryotic initiation factor 4A (404 aa).

Residues 1-28 (MAQQGKVEPQDQDSFLDDQPGIRPIPSF) form a disordered region. The short motif at 26–54 (PSFDDMPLHQNLLRGIYSHGFEKPSSIQQ) is the Q motif element. The region spanning 57 to 231 (IVPFTRGGDI…KKFMRDPTRI (175 aa)) is the Helicase ATP-binding domain. 70-77 (AQSGTGKT) serves as a coordination point for ATP. The DEAD box signature appears at 179 to 182 (DEAD). Residues 242-402 (GIKQYFIAVE…ELPVDFAAYL (161 aa)) enclose the Helicase C-terminal domain.

It belongs to the DEAD box helicase family. eIF4A subfamily. In terms of assembly, eIF4F is a multi-subunit complex, the composition of which varies with external and internal environmental conditions. It is composed of at least EIF4A, EIF4E and EIF4G.

It catalyses the reaction ATP + H2O = ADP + phosphate + H(+). Its function is as follows. ATP-dependent RNA helicase which is a subunit of the eIF4F complex involved in cap recognition and is required for mRNA binding to ribosome. In the current model of translation initiation, eIF4A unwinds RNA secondary structures in the 5'-UTR of mRNAs which is necessary to allow efficient binding of the small ribosomal subunit, and subsequent scanning for the initiator codon. The polypeptide is Probable eukaryotic initiation factor 4A (Trypanosoma cruzi (strain CL Brener)).